A 149-amino-acid chain; its full sequence is UPF0756 membrane protein BBR47_12340 (149 aa).

4 helical membrane passes run 6–26 (IILLVIALLSLVAKDLVLVYA), 48–68 (PMFHVGLFCLMVFLLIPIAKG), 86–106 (IAILAGFIISYVGGKGLSILP), and 120–140 (LLAVLLSNGLPAGLIIAAGCI).

It belongs to the UPF0756 family.

The protein resides in the cell membrane. The polypeptide is UPF0756 membrane protein BBR47_12340 (Brevibacillus brevis (strain 47 / JCM 6285 / NBRC 100599)).